A 677-amino-acid polypeptide reads, in one-letter code: Epithelial splicing regulatory protein 1 (677 aa).

RRM domains follow at residues 225 to 302 (TVVR…KATG), 326 to 406 (VIVR…RSTA), and 445 to 525 (DCVR…QCSA). Ser-543 carries the post-translational modification Phosphoserine. Omega-N-methylarginine is present on Arg-578.

The protein belongs to the ESRP family.

Its subcellular location is the nucleus. Its function is as follows. mRNA splicing factor that regulates the formation of epithelial cell-specific isoforms. Specifically regulates the expression of FGFR2-IIIb, an epithelial cell-specific isoform of FGFR2. Also regulates the splicing of CD44, CTNND1, ENAH, 3 transcripts that undergo changes in splicing during the epithelial-to-mesenchymal transition (EMT). Acts by directly binding specific sequences in mRNAs. Binds the GU-rich sequence motifs in the ISE/ISS-3, a cis-element regulatory region present in the mRNA of FGFR2. Regulates splicing and expression of genes involved in inner ear development, auditory hair cell differentiation, and cell fate specification in the cochlear epithelium. This Rattus norvegicus (Rat) protein is Epithelial splicing regulatory protein 1 (Esrp1).